The following is a 199-amino-acid chain: NAD(P)H dehydrogenase (quinone) (199 aa).

Residues 4–190 (VLVLYYSAYG…AGARYQGRMI (187 aa)) form the Flavodoxin-like domain. FMN is bound by residues 10-15 (SAYGHI) and 78-80 (TRF). Position 12 (Y12) interacts with NAD(+). W98 serves as a coordination point for substrate. FMN-binding positions include 113–119 (SSATQHG) and H134.

The protein belongs to the WrbA family. FMN serves as cofactor.

The enzyme catalyses a quinone + NADH + H(+) = a quinol + NAD(+). It carries out the reaction a quinone + NADPH + H(+) = a quinol + NADP(+). The chain is NAD(P)H dehydrogenase (quinone) from Nitrobacter winogradskyi (strain ATCC 25391 / DSM 10237 / CIP 104748 / NCIMB 11846 / Nb-255).